A 111-amino-acid polypeptide reads, in one-letter code: Ig kappa chain V-III region PC 3741/TEPC 111 (111 aa).

Positions 1-23 are framework-1; that stretch reads DIVLTQSPASLAVSLGQRATISC. The cysteines at positions 23 and 92 are disulfide-linked. The segment at 24–38 is complementarity-determining-1; sequence RASESVDSYGNSFMH. A framework-2 region spans residues 39 to 53; that stretch reads WYQQKPGQPPKLLIY. Positions 54–60 are complementarity-determining-2; the sequence is RASNLES. Residues 61–92 form a framework-3 region; that stretch reads GIPARFSGSGSRTDFTLTINPVEADDVATYYC. Residues 93-101 are complementarity-determining-3; that stretch reads QQSNEDPYT. Residues 102–111 are framework-4; it reads FGGGTKLEIK.

This is Ig kappa chain V-III region PC 3741/TEPC 111 from Mus musculus (Mouse).